The sequence spans 598 residues: Elongation factor 4 (598 aa).

Residues 4-186 form the tr-type G domain; sequence SRLRNFSIIA…EIVKKIPPPK (183 aa). Residues 16-21 and 133-136 contribute to the GTP site; these read DHGKST and NKID.

It belongs to the TRAFAC class translation factor GTPase superfamily. Classic translation factor GTPase family. LepA subfamily.

It localises to the cell inner membrane. It carries out the reaction GTP + H2O = GDP + phosphate + H(+). Functionally, required for accurate and efficient protein synthesis under certain stress conditions. May act as a fidelity factor of the translation reaction, by catalyzing a one-codon backward translocation of tRNAs on improperly translocated ribosomes. Back-translocation proceeds from a post-translocation (POST) complex to a pre-translocation (PRE) complex, thus giving elongation factor G a second chance to translocate the tRNAs correctly. Binds to ribosomes in a GTP-dependent manner. This Pelobacter propionicus (strain DSM 2379 / NBRC 103807 / OttBd1) protein is Elongation factor 4.